The sequence spans 160 residues: Phosphatidylinositol N-acetylglucosaminyltransferase subunit gpi15 (160 aa).

2 helical membrane-spanning segments follow: residues 22–42 (GTQMFALCFISFVIGATSLAI) and 48–68 (IIITLVELSFLLSLFHIISGV).

It belongs to the PIGH family.

It localises to the endoplasmic reticulum membrane. The catalysed reaction is a 1,2-diacyl-sn-glycero-3-phospho-(1D-myo-inositol) + UDP-N-acetyl-alpha-D-glucosamine = a 6-(N-acetyl-alpha-D-glucosaminyl)-1-(1,2-diacyl-sn-glycero-3-phospho)-1D-myo-inositol + UDP + H(+). It functions in the pathway glycolipid biosynthesis; glycosylphosphatidylinositol-anchor biosynthesis. Functionally, part of the complex catalyzing the transfer of N-acetylglucosamine from UDP-N-acetylglucosamine to phosphatidylinositol, the first step of GPI biosynthesis. The polypeptide is Phosphatidylinositol N-acetylglucosaminyltransferase subunit gpi15 (gpi15) (Schizosaccharomyces pombe (strain 972 / ATCC 24843) (Fission yeast)).